A 456-amino-acid polypeptide reads, in one-letter code: tRNA modification GTPase MnmE (456 aa).

The (6S)-5-formyl-5,6,7,8-tetrahydrofolate site is built by Arg-24, Glu-81, and Lys-120. Residues 216-379 enclose the TrmE-type G domain; sequence GMTVVIAGRP…LRDHLKACMG (164 aa). K(+) is bound at residue Asn-226. Residues 226 to 231, 245 to 251, 270 to 273, and 335 to 338 each bind GTP; these read NAGKSS, TDIAGTT, DTAG, and NKAD. A Mg(2+)-binding site is contributed by Ser-230. Residues Thr-245, Ile-247, and Thr-250 each coordinate K(+). Thr-251 serves as a coordination point for Mg(2+). Lys-456 contributes to the (6S)-5-formyl-5,6,7,8-tetrahydrofolate binding site.

It belongs to the TRAFAC class TrmE-Era-EngA-EngB-Septin-like GTPase superfamily. TrmE GTPase family. Homodimer. Heterotetramer of two MnmE and two MnmG subunits. Requires K(+) as cofactor.

It localises to the cytoplasm. Functionally, exhibits a very high intrinsic GTPase hydrolysis rate. Involved in the addition of a carboxymethylaminomethyl (cmnm) group at the wobble position (U34) of certain tRNAs, forming tRNA-cmnm(5)s(2)U34. The polypeptide is tRNA modification GTPase MnmE (Pseudomonas putida (strain GB-1)).